A 196-amino-acid polypeptide reads, in one-letter code: Guanylate kinase (196 aa).

The disordered stretch occupies residues 1 to 24 (MPVESGAGNDQPKRLTVLSGPSGV). Residues 13-191 (KRLTVLSGPS…VCDELLALIA (179 aa)) form the Guanylate kinase-like domain. Residue 20-27 (GPSGVGKS) participates in ATP binding.

Belongs to the guanylate kinase family.

Its subcellular location is the cytoplasm. The enzyme catalyses GMP + ATP = GDP + ADP. Functionally, essential for recycling GMP and indirectly, cGMP. The sequence is that of Guanylate kinase from Thermobifida fusca (strain YX).